The following is a 473-amino-acid chain: Probable ribonuclease FAU-1 (473 aa).

The protein belongs to the FAU-1 family.

Functionally, probable RNase involved in rRNA stability through maturation and/or degradation of precursor rRNAs. Binds to RNA in loop regions with AU-rich sequences. In Hyperthermus butylicus (strain DSM 5456 / JCM 9403 / PLM1-5), this protein is Probable ribonuclease FAU-1.